Reading from the N-terminus, the 128-residue chain is RutC family protein BUsg_359 (128 aa).

This sequence belongs to the RutC family.

This Buchnera aphidicola subsp. Schizaphis graminum (strain Sg) protein is RutC family protein BUsg_359.